An 880-amino-acid chain; its full sequence is Alanine--tRNA ligase (880 aa).

Positions 567, 571, 669, and 673 each coordinate Zn(2+).

This sequence belongs to the class-II aminoacyl-tRNA synthetase family. Requires Zn(2+) as cofactor.

Its subcellular location is the cytoplasm. The enzyme catalyses tRNA(Ala) + L-alanine + ATP = L-alanyl-tRNA(Ala) + AMP + diphosphate. Catalyzes the attachment of alanine to tRNA(Ala) in a two-step reaction: alanine is first activated by ATP to form Ala-AMP and then transferred to the acceptor end of tRNA(Ala). Also edits incorrectly charged Ser-tRNA(Ala) and Gly-tRNA(Ala) via its editing domain. This is Alanine--tRNA ligase from Bacillus thuringiensis subsp. konkukian (strain 97-27).